Here is a 515-residue protein sequence, read N- to C-terminus: Maturase K (515 aa).

The protein belongs to the intron maturase 2 family. MatK subfamily.

The protein localises to the plastid. It localises to the chloroplast. In terms of biological role, usually encoded in the trnK tRNA gene intron. Probably assists in splicing its own and other chloroplast group II introns. This is Maturase K from Pinus patula (Mexican weeping pine).